Consider the following 264-residue polypeptide: Non-homologous end-joining factor xrc4 (264 aa).

Positions 173–186 are enriched in basic and acidic residues; it reads RNNEDNEDNHHINY. A disordered region spans residues 173–264; sequence RNNEDNEDNH…SHESSETVSE (92 aa). A compositionally biased stretch (polar residues) spans 200–209; sequence QEGVNSSAVS. Basic and acidic residues predominate over residues 248 to 264; the sequence is DDSHRRSSHESSETVSE.

The protein belongs to the XRCC4-XLF family. XRCC4 subfamily. Interacts with lig4; the interaction is direct.

Its subcellular location is the nucleus. Involved in double-strand break repair via non-homologous end joining (NHEJ); the repair of a double-strand break in DNA in which the two broken ends are rejoined with little or no sequence complementarity. The polypeptide is Non-homologous end-joining factor xrc4 (Schizosaccharomyces pombe (strain 972 / ATCC 24843) (Fission yeast)).